Reading from the N-terminus, the 130-residue chain is Protein ApaG (130 aa).

The region spanning 3 to 127 is the ApaG domain; that stretch reads RAVTRRIEVT…FSLDSPEGKR (125 aa).

This chain is Protein ApaG, found in Rhodopseudomonas palustris (strain ATCC BAA-98 / CGA009).